Here is a 471-residue protein sequence, read N- to C-terminus: Putative multidrug resistance protein MdtD (471 aa).

The next 13 helical transmembrane spans lie at 12–32 (LWIVAFGFFMQSLDTTIVNTA), 49–69 (MVVVSYVLTVAVMLPASGWLA), 77–97 (IFFTAIVLFTLGSLFCAWSST), 102–124 (VLARVLQGVGGAMMVPVGRLTVM), 138–158 (FVTLPGQVGPLLGPALGGILV), 165–185 (WIFLINIPVGIVGAIATLMLM), 197–217 (LSGFLLLAVGMAVLTMALDGS), 222–242 (LSPLSLGALVLCGILAIALYL), 263–283 (FSLGLSGSFAGRVGSGMLPFM), 286–306 (VFLQIGLGFSPFHAGLMMIPM), 342–362 (LLFMSVAMLGWYYALPFVLFL), 396–416 (MIMQLSMSIGVTIAGLLLGMF), and 431–451 (VFMYTWLCMALIIALPALIFA).

Belongs to the major facilitator superfamily. TCR/Tet family.

It localises to the cell inner membrane. The polypeptide is Putative multidrug resistance protein MdtD (Citrobacter koseri (strain ATCC BAA-895 / CDC 4225-83 / SGSC4696)).